The following is a 70-amino-acid chain: Small ribosomal subunit protein bS21A (70 aa).

Belongs to the bacterial ribosomal protein bS21 family.

This Burkholderia mallei (strain ATCC 23344) protein is Small ribosomal subunit protein bS21A (rpsU1).